The sequence spans 278 residues: 4-deoxy-L-threo-5-hexosulose-uronate ketol-isomerase (278 aa).

Residues histidine 196, histidine 198, glutamate 203, and histidine 245 each contribute to the Zn(2+) site.

This sequence belongs to the KduI family. Requires Zn(2+) as cofactor.

The catalysed reaction is 5-dehydro-4-deoxy-D-glucuronate = 3-deoxy-D-glycero-2,5-hexodiulosonate. The protein operates within glycan metabolism; pectin degradation; 2-dehydro-3-deoxy-D-gluconate from pectin: step 4/5. Its function is as follows. Catalyzes the isomerization of 5-dehydro-4-deoxy-D-glucuronate to 3-deoxy-D-glycero-2,5-hexodiulosonate. In Yersinia pestis bv. Antiqua (strain Antiqua), this protein is 4-deoxy-L-threo-5-hexosulose-uronate ketol-isomerase.